The chain runs to 191 residues: MNPILHPLIDNGITPGDPNFAGGNLYCKCPQNKVTVTLKSNVAHNHACGCSKCWKPTGALFSVVGVVPRENLSVTANGDKLHVVDKNAVIQRNACRQCGVHMFGRIETEHPFKGLDFVHVELSDTRGWQEPQFAGFVSSIIEQGFDPSKMETVRSRFKAVGLETYDSLSPPLMDTIAAYTARKNGKLSARL.

The region spanning 20-166 is the CENP-V/GFA domain; the sequence is FAGGNLYCKC…FKAVGLETYD (147 aa). Zn(2+) is bound by residues Cys27, Cys29, Cys48, Cys50, Cys53, Cys95, and Cys98.

This sequence belongs to the Gfa family. Zn(2+) is required as a cofactor.

The catalysed reaction is S-(hydroxymethyl)glutathione = glutathione + formaldehyde. Its pathway is one-carbon metabolism; formaldehyde degradation; formate from formaldehyde (glutathione route): step 1/3. Functionally, catalyzes the condensation of formaldehyde and glutathione to S-hydroxymethylglutathione. The sequence is that of Putative glutathione-dependent formaldehyde-activating enzyme from Aspergillus terreus (strain NIH 2624 / FGSC A1156).